A 406-amino-acid polypeptide reads, in one-letter code: MLLWLIIFVSGWTLSLGSETEPDFTWHLSRIPQVVSEKTIHLASPTFQADAAAVKATVCGIECQEELPAPSLSQLEDFLSYETVFENGTRTLTRVKVQGLVLEPTQNSSIKGARPRRRRQVYGTDSRFSILDKRFLTNFPFNTAVKLSTGCSGALVSPNHVLTAAHCVHDGKDYVKGSKKLRVGVLKMRNKGGRKKRRGSRRSRREAESGGQSPEHPQESTTQRPGKKSRRGPRVAQGRPSFQWTRVKSTHIPKGWARGENGDPALDFDYALLELKRAQKQQYMELGVSPTISKLPGGRIHFSGFDNDRDDQLVYRFCSVSEESNDLLYQYCDAEAGSTGSGIYLRLKEPGQKNWKRKIIAVYSGHQWVDVHGVQKDYNVAVRITPLKYAQICLWIHGNAANCAYG.

The signal sequence occupies residues 1–17; the sequence is MLLWLIIFVSGWTLSLG. An N-linked (GlcNAc...) asparagine glycan is attached at asparagine 87. The region spanning 121–401 is the Peptidase S1 domain; that stretch reads VYGTDSRFSI…ICLWIHGNAA (281 aa). Cysteine 151 and cysteine 167 form a disulfide bridge. Over residues 186 to 204 the composition is skewed to basic residues; the sequence is LKMRNKGGRKKRRGSRRSR. Residues 186–248 form a disordered region; it reads LKMRNKGGRK…RPSFQWTRVK (63 aa).

It belongs to the peptidase S1 family.

Its subcellular location is the secreted. This chain is Inactive serine protease 35 (Prss35), found in Rattus norvegicus (Rat).